We begin with the raw amino-acid sequence, 188 residues long: Sulfopyruvate decarboxylase subunit beta (188 aa).

Belongs to the TPP enzyme family. Heterododecamer composed of 6 subunits alpha and 6 subunits beta. Thiamine diphosphate serves as cofactor.

The catalysed reaction is 3-sulfopyruvate + H(+) = sulfoacetaldehyde + CO2. It participates in cofactor biosynthesis; coenzyme M biosynthesis; sulfoacetaldehyde from phosphoenolpyruvate and sulfite: step 4/4. Inhibited by oxygen when heated in air at 80 degrees Celsius. The enzyme is reactivated by addition of dithionite. Involved in the biosynthesis of the coenzyme M (2-mercaptoethanesulfonic acid). Catalyzes the decarboxylation of sulfopyruvate to sulfoacetaldehyde. The protein is Sulfopyruvate decarboxylase subunit beta of Methanocaldococcus jannaschii (strain ATCC 43067 / DSM 2661 / JAL-1 / JCM 10045 / NBRC 100440) (Methanococcus jannaschii).